The primary structure comprises 273 residues: Dermonecrotic toxin LapSicTox-alphaIB1aiv (273 aa).

Histidine 5 is a catalytic residue. 2 residues coordinate Mg(2+): glutamate 25 and aspartate 27. Residue histidine 41 is the Nucleophile of the active site. Disulfide bonds link cysteine 45/cysteine 51 and cysteine 47/cysteine 190. Aspartate 85 is a binding site for Mg(2+). Asparagine 250 carries an N-linked (GlcNAc...) asparagine glycan.

Belongs to the arthropod phospholipase D family. Class II subfamily. Mg(2+) serves as cofactor. In terms of tissue distribution, expressed by the venom gland.

The protein resides in the secreted. The enzyme catalyses an N-(acyl)-sphingosylphosphocholine = an N-(acyl)-sphingosyl-1,3-cyclic phosphate + choline. It catalyses the reaction an N-(acyl)-sphingosylphosphoethanolamine = an N-(acyl)-sphingosyl-1,3-cyclic phosphate + ethanolamine. The catalysed reaction is a 1-acyl-sn-glycero-3-phosphocholine = a 1-acyl-sn-glycero-2,3-cyclic phosphate + choline. It carries out the reaction a 1-acyl-sn-glycero-3-phosphoethanolamine = a 1-acyl-sn-glycero-2,3-cyclic phosphate + ethanolamine. Its function is as follows. Dermonecrotic toxins cleave the phosphodiester linkage between the phosphate and headgroup of certain phospholipids (sphingolipid and lysolipid substrates), forming an alcohol (often choline) and a cyclic phosphate. This toxin acts on sphingomyelin (SM). It may also act on ceramide phosphoethanolamine (CPE), lysophosphatidylcholine (LPC) and lysophosphatidylethanolamine (LPE), but not on lysophosphatidylserine (LPS), and lysophosphatidylglycerol (LPG). It acts by transphosphatidylation, releasing exclusively cyclic phosphate products as second products. Induces dermonecrosis, hemolysis, increased vascular permeability, edema, inflammatory response, and platelet aggregation. The polypeptide is Dermonecrotic toxin LapSicTox-alphaIB1aiv (Loxosceles apachea (Apache recluse spider)).